The chain runs to 151 residues: Cytochrome c-type biogenesis protein CcmE (151 aa).

Residues 1–9 are Cytoplasmic-facing; that stretch reads MKGLKKKRR. The helical; Signal-anchor for type II membrane protein transmembrane segment at 10-30 threads the bilayer; it reads IQIIALAFVALAGSTALIGYA. Residues 31-151 are Periplasmic-facing; the sequence is MRDGINFFRS…FQHTEDQPQG (121 aa). Heme contacts are provided by histidine 123 and tyrosine 127.

The protein belongs to the CcmE/CycJ family.

The protein localises to the cell inner membrane. In terms of biological role, heme chaperone required for the biogenesis of c-type cytochromes. Transiently binds heme delivered by CcmC and transfers the heme to apo-cytochromes in a process facilitated by CcmF and CcmH. The polypeptide is Cytochrome c-type biogenesis protein CcmE (Cereibacter sphaeroides (strain ATCC 17029 / ATH 2.4.9) (Rhodobacter sphaeroides)).